Here is a 714-residue protein sequence, read N- to C-terminus: G protein-coupled receptor kinase 2 (714 aa).

Residues 1 to 308 (MELENIVANT…LEAQPITYKT (308 aa)) are N-terminal. 2 RGS domains span residues 53–174 (YGYV…SQHS) and 177–294 (INHK…HRYL). Residues 141–229 (SNANPTETAE…GGGEGGGGGK (89 aa)) form a disordered region. The span at 154-175 (CNNTTANNCNNINNSNNSQHSS) shows a compositional bias: low complexity. Basic and acidic residues-rich tracts occupy residues 176–190 (DINH…HNGD) and 199–220 (HQDD…EKGG). Residues 309–574 (FRMYRVLGKG…GQDVMAHPFF (266 aa)) enclose the Protein kinase domain. Residues 315 to 323 (LGKGGFGEV) and Lys-338 each bind ATP. The active-site Proton acceptor is the Asp-435. An AGC-kinase C-terminal domain is found at 577–642 (TQLNWRRLEA…GSVSISWQNE (66 aa)). Ser-612 bears the Phosphoserine mark. Thr-613 is modified (phosphothreonine). The disordered stretch occupies residues 667–714 (INAAPEPDKAGCFPFRRKKKQPARTQPIPIPEHLLTTSHSVSSTTVES). Residues 698–714 (EHLLTTSHSVSSTTVES) are compositionally biased toward low complexity.

The protein belongs to the protein kinase superfamily. AGC Ser/Thr protein kinase family. GPRK subfamily. As to expression, expressed in all larval tissues and in adult ovaries. Larval CNS staining is localized to axons projecting to the optic lobes and the mushroom bodies, in the longitudinal connectives, and in cell bodies and nerves of the ring gland corpus allatum. Adult CNS staining is detectable only in cell bodies and processes associated with the ellipsoid body of the central complex and portions of the mushroom bodies. In the wing disk, expression is confined to a stripe that parallels the anterior/posterior boundary of the wing blade and the hinge region, and weak expression in the prospective notum.

The protein localises to the membrane. The enzyme catalyses [G-protein-coupled receptor] + ATP = [G-protein-coupled receptor]-phosphate + ADP + H(+). Specifically phosphorylates the activated forms of G protein-coupled receptors. Required during oogenesis and embryogenesis; component of a signaling pathway that functions during egg chamber maturation. This Drosophila melanogaster (Fruit fly) protein is G protein-coupled receptor kinase 2 (Gprk2).